Reading from the N-terminus, the 150-residue chain is Protein Smg homolog (150 aa).

This sequence belongs to the Smg family.

The sequence is that of Protein Smg homolog from Methylobacillus flagellatus (strain ATCC 51484 / DSM 6875 / VKM B-1610 / KT).